A 323-amino-acid chain; its full sequence is Tetraacyldisaccharide 4'-kinase (323 aa).

56–63 (TVGGVGKT) provides a ligand contact to ATP.

It belongs to the LpxK family.

The catalysed reaction is a lipid A disaccharide + ATP = a lipid IVA + ADP + H(+). The protein operates within glycolipid biosynthesis; lipid IV(A) biosynthesis; lipid IV(A) from (3R)-3-hydroxytetradecanoyl-[acyl-carrier-protein] and UDP-N-acetyl-alpha-D-glucosamine: step 6/6. Its function is as follows. Transfers the gamma-phosphate of ATP to the 4'-position of a tetraacyldisaccharide 1-phosphate intermediate (termed DS-1-P) to form tetraacyldisaccharide 1,4'-bis-phosphate (lipid IVA). In Legionella pneumophila (strain Lens), this protein is Tetraacyldisaccharide 4'-kinase.